A 328-amino-acid polypeptide reads, in one-letter code: 6-phosphogluconolactonase (328 aa).

This sequence belongs to the cycloisomerase 2 family.

It carries out the reaction 6-phospho-D-glucono-1,5-lactone + H2O = 6-phospho-D-gluconate + H(+). The protein operates within carbohydrate degradation; pentose phosphate pathway; D-ribulose 5-phosphate from D-glucose 6-phosphate (oxidative stage): step 2/3. Its function is as follows. Catalyzes the hydrolysis of 6-phosphogluconolactone to 6-phosphogluconate. The protein is 6-phosphogluconolactonase of Xenorhabdus nematophila (strain ATCC 19061 / DSM 3370 / CCUG 14189 / LMG 1036 / NCIMB 9965 / AN6).